We begin with the raw amino-acid sequence, 198 residues long: FMN-dependent NADH:quinone oxidoreductase (198 aa).

Residues Ser-10, 16 to 18 (SQS), 94 to 97 (MYNF), and 138 to 141 (TRGG) contribute to the FMN site.

The protein belongs to the azoreductase type 1 family. As to quaternary structure, homodimer. The cofactor is FMN.

It carries out the reaction 2 a quinone + NADH + H(+) = 2 a 1,4-benzosemiquinone + NAD(+). The enzyme catalyses N,N-dimethyl-1,4-phenylenediamine + anthranilate + 2 NAD(+) = 2-(4-dimethylaminophenyl)diazenylbenzoate + 2 NADH + 2 H(+). Functionally, quinone reductase that provides resistance to thiol-specific stress caused by electrophilic quinones. In terms of biological role, also exhibits azoreductase activity. Catalyzes the reductive cleavage of the azo bond in aromatic azo compounds to the corresponding amines. In Shewanella baltica (strain OS223), this protein is FMN-dependent NADH:quinone oxidoreductase.